Consider the following 340-residue polypeptide: Major histocompatibility complex class I-related protein 1 (340 aa).

A signal peptide spans 1–22 (MGELTAFLLPLIIVLMVKHSNS). The segment at 23-109 (RTHSLRYFRL…KRLQRHYNHS (87 aa)) is alpha-1. The antigen-binding cleft stretch occupies residues 23-201 (RTHSLRYFRL…EYGKDTLQRT (179 aa)). Residues 23–302 (RTHSLRYFRL…QESEAIPLVM (280 aa)) lie on the Extracellular side of the membrane. Residues Tyr-29 and Arg-31 each contribute to the 8-(9H-purin-6-yl)-2-oxa-8-azabicyclo[3.3.1]nona-3,6-diene-4,6-dicarbaldehyde site. 5-(2-oxoethylideneamino)-6-(D-ribitylamino)uracil is bound by residues Arg-31, Ser-46, and Lys-65. 5-(2-oxopropylideneamino)-6-(D-ribitylamino)uracil contacts are provided by Arg-31, Ser-46, and Lys-65. Residues Arg-31, Ser-46, and Lys-65 each contribute to the 7-hydroxy-6-methyl-8-(1-D-ribityl)lumazine site. 8-(9H-purin-6-yl)-2-oxa-8-azabicyclo[3.3.1]nona-3,6-diene-4,6-dicarbaldehyde-binding residues include Lys-65 and His-80. Lys-65 contacts 2-amino-4-oxopteridine-6-carbaldehyde. Position 65 (Lys-65) interacts with pyridoxal. N-linked (GlcNAc...) asparagine glycosylation is present at Asn-107. Residues 110-201 (GSHTYQRMIG…EYGKDTLQRT (92 aa)) are alpha-2. Arg-116 is a binding site for 8-(9H-purin-6-yl)-2-oxa-8-azabicyclo[3.3.1]nona-3,6-diene-4,6-dicarbaldehyde. Residues Arg-116, Tyr-174, and Gln-175 each contribute to the 5-(2-oxoethylideneamino)-6-(D-ribitylamino)uracil site. Residues Arg-116, Tyr-174, and Gln-175 each contribute to the 5-(2-oxopropylideneamino)-6-(D-ribitylamino)uracil site. 7-hydroxy-6-methyl-8-(1-D-ribityl)lumazine is bound by residues Arg-116, Tyr-174, and Gln-175. 2 disulfide bridges follow: Cys-120–Cys-183 and Cys-222–Cys-278. Residues 202–293 (EPPLVRVNRK…GVHVVLQVPQ (92 aa)) form an alpha-3 region. The Ig-like C1-type domain occupies 203 to 282 (PPLVRVNRKE…SNLYSCHVEH (80 aa)). The connecting peptide stretch occupies residues 294 to 302 (ESEAIPLVM). Residues 303–323 (KAVSGSIVFVIVLAGVGVLVW) form a helical membrane-spanning segment. Residues 324 to 340 (RRRPREQNGAVYLPTPD) lie on the Cytoplasmic side of the membrane.

Belongs to the MHC class I family. In terms of assembly, heterotrimer that consists of MR1, B2M and metabolite antigen. Major classes of metabolite ligands presented by MR1 include riboflavin-related antigens, pyrimidines and ribityl lumazines, nucleobase adducts and folate derivatives. Forms reversible covalent Schiff base complexes with microbial pyrimidine-based metabolite, which serves as a molecular switch triggering complete folding, stable association with B2M and translocation of the ternary complex from endoplasmic reticulum to the plasma membrane. Alternatively, forms non-Schiff base complexes with ribityl lumazines. On antigen-presenting cells, the ternary complex interacts with TCR on MR1-restricted T cells. Interacts with TAPBP and TAPBPL chaperones in the endoplasmic reticulum. TAPBP associated or not with MHC class I peptide loading complex binds ligand-free MR1 or MR1-B2M complex, providing for stable MR1 pools ready for metabolite antigen processing. TAPBPL interacts with MR1 in a ligand-independent way; this interaction may stabilize MR1 pool and facilitate ligand loading and dissociation. Structurally, MR1-B2M heterodimer adopts a topology similar to classical MHC class I molecules, with alpha-1 and alpha-2 domains of MR1 forming the antigen-binding cleft composed of two alpha-helices resting on a floor of 7-stranded anti-parallel beta-pleated sheet. MR1-B2M heterodimer (via alpha-helices) interacts with TCR (via CDR domains). N-glycosylated.

It localises to the cell membrane. The protein localises to the endoplasmic reticulum membrane. The protein resides in the golgi apparatus membrane. It is found in the early endosome membrane. Its subcellular location is the late endosome membrane. Its function is as follows. Antigen-presenting molecule specialized in displaying microbial pyrimidine-based metabolites to alpha-beta T cell receptors (TCR) on innate-type mucosal-associated invariant T (MAIT) cells. In complex with B2M preferentially presents riboflavin-derived metabolites to semi-invariant TCRs on MAIT cells, guiding immune surveillance of the microbial metabolome at mucosal epithelial barriers. Signature pyrimidine-based microbial antigens are generated via non-enzymatic condensation of metabolite intermediates of the riboflavin pathway with by-products arising from other metabolic pathways such as glycolysis. Typical potent antigenic metabolites are 5-(2-oxoethylideneamino)-6-D-ribitylaminouracil (5-OE-RU) and 5-(2-oxopropylideneamino)-6-D-ribitylaminouracil (5-OP-RU), products of condensation of 5-amino-6-D-ribityaminouracil (5-A-RU) with glyoxal or methylglyoxal by-products, respectively. May present microbial antigens to various MAIT cell subsets, providing for unique recognition of diverse microbes, including pathogens that do not synthesize riboflavin. Upon antigen recognition, elicits rapid innate-type MAIT cell activation to eliminate pathogenic microbes by directly killing infected cells. During T cell development, drives thymic selection and post-thymic terminal differentiation of MAIT cells in a process dependent on commensal microflora. Acts as an immune sensor of cancer cell metabolome. May present a tumor-specific or -associated metabolite essential for cancer cell survival to a pan-cancer TCR on a non-MAIT CD8-positive T cell clone, triggering T cell-mediated killing of a wide range of cancer cell types. May present tumor-enriched pyridoxal and pyridoxal 5'-phosphate antigens, enabling preferential recognition of cancer cells. Presents nucleobase carbonyl adducts generated during oxidative stress. Captures M3Ade, a nucleobase adduct composed of one adenine modified by a malondialdehyde trimer, for recognition by MR1-restricted T cell clones expressing a polyclonal TCR repertoire. This Pongo abelii (Sumatran orangutan) protein is Major histocompatibility complex class I-related protein 1.